Here is a 267-residue protein sequence, read N- to C-terminus: Urease accessory protein UreD 2 (267 aa).

The protein belongs to the UreD family. In terms of assembly, ureD, UreF and UreG form a complex that acts as a GTP-hydrolysis-dependent molecular chaperone, activating the urease apoprotein by helping to assemble the nickel containing metallocenter of UreC. The UreE protein probably delivers the nickel.

It localises to the cytoplasm. Its function is as follows. Required for maturation of urease via the functional incorporation of the urease nickel metallocenter. The protein is Urease accessory protein UreD 2 of Synechococcus sp. (strain JA-3-3Ab) (Cyanobacteria bacterium Yellowstone A-Prime).